The chain runs to 358 residues: GTPase Obg (358 aa).

The Obg domain maps to 1–159 (MKFVDEVTIR…RNLHLELRLL (159 aa)). One can recognise an OBG-type G domain in the interval 160–334 (ADVGLLGMPN…LAQDVMNRLE (175 aa)). GTP contacts are provided by residues 166–173 (GMPNAGKS), 191–195 (FTTLY), 213–216 (DIPG), 284–287 (NKLD), and 315–317 (SAL). Mg(2+) is bound by residues serine 173 and threonine 193. The tract at residues 337-358 (DEEAREAGERARREQRQEEGPE) is disordered. Residues 341–358 (REAGERARREQRQEEGPE) show a composition bias toward basic and acidic residues.

Belongs to the TRAFAC class OBG-HflX-like GTPase superfamily. OBG GTPase family. As to quaternary structure, monomer. The cofactor is Mg(2+).

Its subcellular location is the cytoplasm. Its function is as follows. An essential GTPase which binds GTP, GDP and possibly (p)ppGpp with moderate affinity, with high nucleotide exchange rates and a fairly low GTP hydrolysis rate. Plays a role in control of the cell cycle, stress response, ribosome biogenesis and in those bacteria that undergo differentiation, in morphogenesis control. The protein is GTPase Obg of Alkalilimnicola ehrlichii (strain ATCC BAA-1101 / DSM 17681 / MLHE-1).